Consider the following 471-residue polypeptide: Putative F-box protein At5g36200 (471 aa).

Residues 1 to 46 (MAMSDLPNDLVEEIISRVPVKSIRAVSSTCKNWNTLSNDHSFTRKL) enclose the F-box domain.

This chain is Putative F-box protein At5g36200, found in Arabidopsis thaliana (Mouse-ear cress).